Consider the following 265-residue polypeptide: Hydroxyethylthiazole kinase (265 aa).

Position 50 (M50) interacts with substrate. Residues R125 and T171 each contribute to the ATP site. Substrate is bound at residue G198.

Belongs to the Thz kinase family. Mg(2+) serves as cofactor.

It carries out the reaction 5-(2-hydroxyethyl)-4-methylthiazole + ATP = 4-methyl-5-(2-phosphooxyethyl)-thiazole + ADP + H(+). It functions in the pathway cofactor biosynthesis; thiamine diphosphate biosynthesis; 4-methyl-5-(2-phosphoethyl)-thiazole from 5-(2-hydroxyethyl)-4-methylthiazole: step 1/1. Catalyzes the phosphorylation of the hydroxyl group of 4-methyl-5-beta-hydroxyethylthiazole (THZ). The chain is Hydroxyethylthiazole kinase from Salmonella newport (strain SL254).